A 210-amino-acid polypeptide reads, in one-letter code: Synaptosomal-associated protein 23 (210 aa).

Residue methionine 1 is modified to N-acetylmethionine. Phosphoserine is present on residues serine 5, serine 20, serine 23, and serine 34. Residues 14–76 enclose the t-SNARE coiled-coil homology 1 domain; the sequence is HQVTDESLES…REAEKTLTEL (63 aa). Residues 23–76 adopt a coiled-coil conformation; that stretch reads STRRILGLAIESQDAGIKTITMLDEQGEQLNRIEEGMDQINKDMREAEKTLTEL. S-palmitoyl cysteine attachment occurs at residues cysteine 79, cysteine 80, cysteine 83, cysteine 85, and cysteine 87. Residues 104–136 form a disordered region; it reads GDGGDSSPSNVVSKQPSRITNGQPQQTTGAASG. The segment covering 109–133 has biased composition (polar residues); sequence SSPSNVVSKQPSRITNGQPQQTTGA. Phosphoserine occurs at positions 110 and 160. In terms of domain architecture, t-SNARE coiled-coil homology 2 spans 145 to 207; that stretch reads DAREDEMEEN…DIANTRAKKL (63 aa).

It belongs to the SNAP-25 family. In terms of assembly, homotetramer (via coiled-coil domain), also forms heterotetramers with STX4 and VAMP3. Found in a complex with VAMP8 and STX1A. Found in a complex with VAMP8 and STX4 in pancreas. Interacts simultaneously with SNAPIN and SYN4. Interacts with STX1A. Interacts with STX12. Interacts tightly to multiple syntaxins and synaptobrevins/VAMPs. Interacts with ZDHHC13 (via ANK repeats). Interacts with ZDHHC17 (via ANK repeats).

Its subcellular location is the cell membrane. The protein resides in the synapse. It is found in the synaptosome. It localises to the cytoplasmic vesicle membrane. In terms of biological role, essential component of the high affinity receptor for the general membrane fusion machinery and an important regulator of transport vesicle docking and fusion. The chain is Synaptosomal-associated protein 23 (Snap23) from Rattus norvegicus (Rat).